We begin with the raw amino-acid sequence, 321 residues long: uncharacterized protein (321 aa).

Helical transmembrane passes span 10 to 28 (LWCS…EMSI), 41 to 63 (IALY…IWIY), 94 to 111 (NVAM…SMVH), 116 to 138 (LFYG…VWLL), 143 to 165 (FLFY…SNGV), 200 to 222 (NGVI…DIIF), 237 to 259 (PFII…VILA), 266 to 283 (YIIK…SIKI), and 293 to 315 (IMLS…KFFF).

The protein belongs to the TerC family.

It localises to the cell membrane. This is an uncharacterized protein from Buchnera aphidicola subsp. Baizongia pistaciae (strain Bp).